A 173-amino-acid polypeptide reads, in one-letter code: NADH-ubiquinone oxidoreductase chain 6 (173 aa).

Transmembrane regions (helical) follow at residues 1 to 21 (MTYV…AVAS), 25 to 45 (PYFG…VLIW), 53 to 73 (LVLF…SAAL), 82 to 102 (LGSW…FGIL), and 142 to 162 (GVLL…LELV).

This sequence belongs to the complex I subunit 6 family.

It is found in the mitochondrion membrane. The enzyme catalyses a ubiquinone + NADH + 5 H(+)(in) = a ubiquinol + NAD(+) + 4 H(+)(out). In terms of biological role, core subunit of the mitochondrial membrane respiratory chain NADH dehydrogenase (Complex I) that is believed to belong to the minimal assembly required for catalysis. Complex I functions in the transfer of electrons from NADH to the respiratory chain. The immediate electron acceptor for the enzyme is believed to be ubiquinone. The polypeptide is NADH-ubiquinone oxidoreductase chain 6 (MT-ND6) (Tetraodon nigroviridis (Spotted green pufferfish)).